Here is a 689-residue protein sequence, read N- to C-terminus: Glycine--tRNA ligase beta subunit (689 aa).

Belongs to the class-II aminoacyl-tRNA synthetase family. Tetramer of two alpha and two beta subunits.

The protein resides in the cytoplasm. It carries out the reaction tRNA(Gly) + glycine + ATP = glycyl-tRNA(Gly) + AMP + diphosphate. This is Glycine--tRNA ligase beta subunit from Shewanella baltica (strain OS155 / ATCC BAA-1091).